We begin with the raw amino-acid sequence, 600 residues long: Zinc finger and BTB domain-containing protein 46 (600 aa).

The BTB domain occupies 31 to 99 (CDACVVVEGK…MYSAHLALTS (69 aa)). The segment at 173–222 (RRTSPANSSGDSAIASCHEGGSSYGKEDQEPKADGPDDVSSQSLWPGDVG) is disordered. The span at 197-207 (GKEDQEPKADG) shows a compositional bias: basic and acidic residues. K229 participates in a covalent cross-link: Glycyl lysine isopeptide (Lys-Gly) (interchain with G-Cter in SUMO2). Residue S234 is modified to Phosphoserine. Residues 235 to 278 (PSHYGGSELPSSKDTAIQNSLSEQGSGDGWQPTGRRKNRKNKET) are disordered. Residues 243 to 259 (LPSSKDTAIQNSLSEQG) show a composition bias toward polar residues. C2H2-type zinc fingers lie at residues 418–436 (FKCPYCSFSAMHQCILKRH) and 446–468 (YPCEICGKKFTRREHMKRHTLVH). Residues 513 to 600 (LDHGGGGEGS…EPDKDFAWIS (88 aa)) form a disordered region. The segment covering 533 to 555 (YLEDPDDPRGEAEEELVEDEDED) has biased composition (acidic residues). Composition is skewed to basic and acidic residues over residues 556–574 (VAKWKDDVGLAHEDALLGD) and 591–600 (EPDKDFAWIS).

Post-translationally, sumoylated. Desumoylation by DESI1 reverses transcriptional repression activity.

The protein localises to the nucleus. Functionally, functions as a transcriptional repressor for PRDM1. In Mus musculus (Mouse), this protein is Zinc finger and BTB domain-containing protein 46 (Zbtb46).